The following is a 390-amino-acid chain: T-cell surface glycoprotein CD1e, membrane-associated (390 aa).

An N-terminal signal peptide occupies residues 1-14 (MLLLILLFFKGLVC). Residues 15–33 (HEKSIVGPQPLGWHHPAEA) constitute a propeptide, removed in sCD1e. 2 N-linked (GlcNAc...) asparagine glycosylation sites follow: Asn49 and Asn70. Cystine bridges form between Cys131/Cys194 and Cys234/Cys288. Positions 215 to 306 (PEVWLSRGPS…GHDIIIHWGG (92 aa)) constitute an Ig-like domain. Residues 305-325 (GGYSILLILMYVAVIVTLVTL) traverse the membrane as a helical segment.

In terms of assembly, heterodimer with B2M (beta-2-microglobulin). The association with B2M appears to be facilitated by the presence of the propeptide. In terms of processing, mono-ubiquitinated. Proteolytically cleaved in endosomes to yield a soluble form.

The protein resides in the golgi apparatus membrane. It localises to the early endosome. The protein localises to the late endosome. Its subcellular location is the lysosome lumen. In terms of biological role, T-cell surface glycoprotein CD1e, soluble is required for the presentation of glycolipid antigens on the cell surface. The membrane-associated form is not active. The chain is T-cell surface glycoprotein CD1e, membrane-associated (CD1E) from Cavia porcellus (Guinea pig).